The sequence spans 72 residues: Large ribosomal subunit protein bL32 (72 aa).

Belongs to the bacterial ribosomal protein bL32 family.

The chain is Large ribosomal subunit protein bL32 from Dehalococcoides mccartyi (strain ATCC BAA-2266 / KCTC 15142 / 195) (Dehalococcoides ethenogenes (strain 195)).